The sequence spans 111 residues: Exocrine gland-secreted peptide 22 (111 aa).

Residues 1–24 (MNSVPVMLFSISILLAAMLTEGRG) form the signal peptide.

This sequence belongs to the exocrine gland-secreted peptide family. Expressed in acinar cells of the lacrimal gland from where it is secreted into tears. Not detected in a range of other tissues tested including other exocrine glands, internal organs and sensory epithelia.

It localises to the secreted. In terms of biological role, pheromone produced by juveniles which activates a small number of vomeronasal organ sensory neurons and exhibits a powerful inhibitory effect on adult male mating behavior. This Mus musculus (Mouse) protein is Exocrine gland-secreted peptide 22.